Reading from the N-terminus, the 94-residue chain is Co-chaperonin GroES (94 aa).

This sequence belongs to the GroES chaperonin family. Heptamer of 7 subunits arranged in a ring. Interacts with the chaperonin GroEL.

It localises to the cytoplasm. Its function is as follows. Together with the chaperonin GroEL, plays an essential role in assisting protein folding. The GroEL-GroES system forms a nano-cage that allows encapsulation of the non-native substrate proteins and provides a physical environment optimized to promote and accelerate protein folding. GroES binds to the apical surface of the GroEL ring, thereby capping the opening of the GroEL channel. The sequence is that of Co-chaperonin GroES from Bacillus mycoides (strain KBAB4) (Bacillus weihenstephanensis).